Consider the following 490-residue polypeptide: Serine hydroxymethyltransferase (490 aa).

Residues leucine 179 and glycine 183–leucine 185 each bind (6S)-5,6,7,8-tetrahydrofolate. Lysine 291 is modified (N6-(pyridoxal phosphate)lysine). Lysine 362 is covalently cross-linked (Isoglutamyl lysine isopeptide (Lys-Gln) (interchain with Q-Cter in protein Pup)).

It belongs to the SHMT family. In terms of assembly, homodimer. Pyridoxal 5'-phosphate serves as cofactor.

It localises to the cytoplasm. It catalyses the reaction (6R)-5,10-methylene-5,6,7,8-tetrahydrofolate + glycine + H2O = (6S)-5,6,7,8-tetrahydrofolate + L-serine. It participates in one-carbon metabolism; tetrahydrofolate interconversion. The protein operates within amino-acid biosynthesis; glycine biosynthesis; glycine from L-serine: step 1/1. Catalyzes the reversible interconversion of serine and glycine with tetrahydrofolate (THF) serving as the one-carbon carrier. This reaction serves as the major source of one-carbon groups required for the biosynthesis of purines, thymidylate, methionine, and other important biomolecules. Also exhibits THF-independent aldolase activity toward beta-hydroxyamino acids, producing glycine and aldehydes, via a retro-aldol mechanism. In Mycolicibacterium smegmatis (strain ATCC 700084 / mc(2)155) (Mycobacterium smegmatis), this protein is Serine hydroxymethyltransferase.